The sequence spans 102 residues: Large ribosomal subunit protein bL21 (102 aa).

Belongs to the bacterial ribosomal protein bL21 family. In terms of assembly, part of the 50S ribosomal subunit. Contacts protein L20.

Its function is as follows. This protein binds to 23S rRNA in the presence of protein L20. The chain is Large ribosomal subunit protein bL21 from Nitratidesulfovibrio vulgaris (strain DSM 19637 / Miyazaki F) (Desulfovibrio vulgaris).